The sequence spans 126 residues: Small ribosomal subunit protein eS6 (126 aa).

Belongs to the eukaryotic ribosomal protein eS6 family.

The polypeptide is Small ribosomal subunit protein eS6 (Methanothermobacter thermautotrophicus (strain ATCC 29096 / DSM 1053 / JCM 10044 / NBRC 100330 / Delta H) (Methanobacterium thermoautotrophicum)).